The sequence spans 548 residues: ADP,ATP carrier protein 1 (548 aa).

Transmembrane regions (helical) follow at residues Arg-39 to Ser-59 and Ser-75 to Ile-95. Residue Asn-101 is glycosylated (N-linked (GlcNAc...) asparagine). The next 8 helical transmembrane spans lie at Val-107 to Met-127, Met-149 to Ser-169, Leu-171 to Leu-191, Phe-204 to Lys-224, Leu-239 to Ile-259, Leu-302 to Ala-322, Ile-350 to Ile-370, and Gly-374 to Phe-394. Asn-400 and Asn-406 each carry an N-linked (GlcNAc...) asparagine glycan. A helical transmembrane segment spans residues Leu-410 to Val-430. Asn-488 carries N-linked (GlcNAc...) asparagine glycosylation. The chain crosses the membrane as a helical span at residues Lys-494–Val-514.

This sequence belongs to the ADP/ATP translocase tlc family.

Its subcellular location is the cell membrane. In terms of biological role, ATP transporter involved in the uptake of ATP from the host cell cytoplasm. Provides the microsporidian cell with host ATP in exchange for ADP. This is an obligate exchange system. This energy acquiring activity is an important component of microsporidian parasitism. This chain is ADP,ATP carrier protein 1 (ANC1), found in Paranosema grylli (Microsporidian parasite).